Consider the following 526-residue polypeptide: Lysine--tRNA ligase (526 aa).

The Mg(2+) site is built by Glu431 and Glu438.

The protein belongs to the class-II aminoacyl-tRNA synthetase family. Homodimer. The cofactor is Mg(2+).

It is found in the cytoplasm. It catalyses the reaction tRNA(Lys) + L-lysine + ATP = L-lysyl-tRNA(Lys) + AMP + diphosphate. The protein is Lysine--tRNA ligase (lysS) of Chlamydia trachomatis serovar D (strain ATCC VR-885 / DSM 19411 / UW-3/Cx).